Here is a 294-residue protein sequence, read N- to C-terminus: 4-diphosphocytidyl-2-C-methyl-D-erythritol kinase (294 aa).

Lysine 11 is a catalytic residue. An ATP-binding site is contributed by proline 96–alanine 106. Aspartate 138 is an active-site residue.

Belongs to the GHMP kinase family. IspE subfamily.

The catalysed reaction is 4-CDP-2-C-methyl-D-erythritol + ATP = 4-CDP-2-C-methyl-D-erythritol 2-phosphate + ADP + H(+). It functions in the pathway isoprenoid biosynthesis; isopentenyl diphosphate biosynthesis via DXP pathway; isopentenyl diphosphate from 1-deoxy-D-xylulose 5-phosphate: step 3/6. In terms of biological role, catalyzes the phosphorylation of the position 2 hydroxy group of 4-diphosphocytidyl-2C-methyl-D-erythritol. The sequence is that of 4-diphosphocytidyl-2-C-methyl-D-erythritol kinase from Rhodopseudomonas palustris (strain BisB5).